The primary structure comprises 231 residues: Protein OPG061 (231 aa).

It belongs to the orthopoxvirus OPG058 family.

It localises to the host nucleus. The protein localises to the host nucleolus. This Vaccinia virus (strain L-IVP) (VACV) protein is Protein OPG061 (OPG061).